We begin with the raw amino-acid sequence, 1044 residues long: MVEVEEKHYTIVKRNGMFVPFNQDRIFQALEAAFRDTRSLETSSPLPKDLEESIAQITHKVVKEVLAKISEGQVVTVERIQDLVESQLYISGLQDVARDYIVYRDQRKAERGNSSSIIAIIRRDGGSAKFNPMKISAALEKAFRATLQINGMTPPATLSEINDLTLRIVEDVLSLHGEEAINLEEIQDIVEKQLMVAGYYDVAKNYILYREARARARANKDQDGQEEFVPQEETYVVQKEDGTTYLLRKTDLEKRFSWACKRFPKTTDSQLLADMAFMNLYSGIKEDEVTTACIMAARANIEREPDYAFIAAELLTSSLYEETLGCSSQDPNLSEIHKKHFKEYILNGEEYRLNPQLKDYDLDALSEVLDLSRDQQFSYMGVQNLYDRYFNLHEGRRLETAQIFWMRVSMGLALNEGEQKNFWAITFYNLLSTFRYTPATPTLFNSGMRHSQLSSCYLSTVKDDLSHIYKVISDNALLSKWAGGIGNDWTDVRATGAVIKGTNGKSQGVIPFIKVANDTAIAVNQGGKRKGAMCVYLENWHLDYEDFLELRKNTGDERRRTHDINTASWIPDLFFKRLEKKGMWTLFSPDDVPGLHEAYGLEFEKLYEEYERKVESGEIRLYKKVEAEVLWRKMLSMLYETGHPWITFKDPSNIRSNQDHVGVVRCSNLCTEILLNCSESETAVCNLGSINLVEHIRNDKLDEEKLKETISIAIRILDNVIDLNFYPTPEAKQANLTHRAVGLGVMGFQDVLYELNISYASQEAVEFSDECSEIIAYYAILASSLLAKERGTYASYSGSKWDRGYLPLDTIELLKETRGEHNVLVDTSSKKDWTPVRDTIQKYGMRNSQVMAIAPTATISNIIGVTQSIEPMYKHLFVKSNLSGEFTIPNTYLIKKLKELGLWDAEMLDDLKYFDGSLLEIERIPNHLKKLFLTAFEIEPEWIIECTSRRQKWIDMGVSLNLYLAEPDGKKLSNMYLTAWKKGLKTTYYLRSQAATSVEKSFIDINKRGIQPRWMKNKSASTSIVVERKTTPVCSMEEGCESCQ.

3 consecutive ATP-cone domains span residues Tyr-9–Arg-111, Ile-118–Arg-217, and Tyr-235–Gly-325. Residues Thr-440, Ser-455 to Cys-456, Gly-484, Asn-668 to Glu-672, and Pro-855 to Ile-859 contribute to the substrate site. Residues Cys-456 and Cys-685 are joined by a disulfide bond. Residue Asn-668 is the Proton acceptor of the active site. Cys-670 serves as the catalytic Cysteine radical intermediate. Residue Glu-672 is the Proton acceptor of the active site.

The protein belongs to the ribonucleoside diphosphate reductase large chain family. Tetramer of two alpha and two beta subunits.

It catalyses the reaction a 2'-deoxyribonucleoside 5'-diphosphate + [thioredoxin]-disulfide + H2O = a ribonucleoside 5'-diphosphate + [thioredoxin]-dithiol. With respect to regulation, under complex allosteric control mediated by deoxynucleoside triphosphates and ATP binding. The type of nucleotide bound at the specificity site determines substrate preference. It seems probable that ATP makes the enzyme reduce CDP and UDP, dGTP favors ADP reduction and dTTP favors GDP reduction. Functionally, provides the precursors necessary for DNA synthesis. Catalyzes the biosynthesis of deoxyribonucleotides from the corresponding ribonucleotides. The polypeptide is Ribonucleoside-diphosphate reductase subunit alpha (nrdA) (Chlamydia pneumoniae (Chlamydophila pneumoniae)).